The primary structure comprises 142 residues: Anti-sigma F factor (142 aa).

This sequence belongs to the anti-sigma-factor family.

The enzyme catalyses L-seryl-[protein] + ATP = O-phospho-L-seryl-[protein] + ADP + H(+). The catalysed reaction is L-threonyl-[protein] + ATP = O-phospho-L-threonyl-[protein] + ADP + H(+). Its function is as follows. Binds to sigma F and blocks its ability to form an RNA polymerase holoenzyme (E-sigma F). Phosphorylates SpoIIAA on a serine residue. This phosphorylation may enable SpoIIAA to act as an anti-anti-sigma factor that counteracts SpoIIAB and thus releases sigma F from inhibition. This Clostridium kluyveri (strain NBRC 12016) protein is Anti-sigma F factor.